A 297-amino-acid chain; its full sequence is Nucleotide-binding protein Bxeno_A0336 (297 aa).

8 to 15 (GISGSGKS) provides a ligand contact to ATP. GTP is bound at residue 57 to 60 (DARS).

This sequence belongs to the RapZ-like family.

In terms of biological role, displays ATPase and GTPase activities. This is Nucleotide-binding protein Bxeno_A0336 from Paraburkholderia xenovorans (strain LB400).